A 540-amino-acid chain; its full sequence is Glucose-6-phosphate isomerase (540 aa).

Glu-351 functions as the Proton donor in the catalytic mechanism. Catalysis depends on residues His-382 and Lys-506.

The protein belongs to the GPI family.

It is found in the cytoplasm. The catalysed reaction is alpha-D-glucose 6-phosphate = beta-D-fructose 6-phosphate. The protein operates within carbohydrate biosynthesis; gluconeogenesis. It participates in carbohydrate degradation; glycolysis; D-glyceraldehyde 3-phosphate and glycerone phosphate from D-glucose: step 2/4. Functionally, catalyzes the reversible isomerization of glucose-6-phosphate to fructose-6-phosphate. This is Glucose-6-phosphate isomerase from Corynebacterium glutamicum (strain ATCC 13032 / DSM 20300 / JCM 1318 / BCRC 11384 / CCUG 27702 / LMG 3730 / NBRC 12168 / NCIMB 10025 / NRRL B-2784 / 534).